The chain runs to 72 residues: UPF0154 protein lhv_1362 (72 aa).

A helical transmembrane segment spans residues 3–23 (LGLAIFLIIIALLVGAVAGFY).

It belongs to the UPF0154 family.

The protein localises to the cell membrane. This chain is UPF0154 protein lhv_1362, found in Lactobacillus helveticus (strain DPC 4571).